Reading from the N-terminus, the 793-residue chain is Probable phosphoketolase (793 aa).

The protein belongs to the XFP family. The cofactor is thiamine diphosphate.

This Streptomyces avermitilis (strain ATCC 31267 / DSM 46492 / JCM 5070 / NBRC 14893 / NCIMB 12804 / NRRL 8165 / MA-4680) protein is Probable phosphoketolase.